A 124-amino-acid chain; its full sequence is Fluoride-specific ion channel FluC 1 (124 aa).

Transmembrane regions (helical) follow at residues 1-21, 30-50, 56-76, and 102-122; these read MNWLLVIAGAMVGAPLRYVTD, AVFPWGTFAINVTGCLVLGLL, AGVASPHLELLLGTGLCGALT, and IASVAAGLGAAFAGVWFAQAL. Na(+) contacts are provided by Gly-73 and Thr-76.

This sequence belongs to the fluoride channel Fluc/FEX (TC 1.A.43) family.

The protein localises to the cell membrane. The enzyme catalyses fluoride(in) = fluoride(out). Its activity is regulated as follows. Na(+) is not transported, but it plays an essential structural role and its presence is essential for fluoride channel function. In terms of biological role, fluoride-specific ion channel. Important for reducing fluoride concentration in the cell, thus reducing its toxicity. The chain is Fluoride-specific ion channel FluC 1 from Streptomyces avermitilis (strain ATCC 31267 / DSM 46492 / JCM 5070 / NBRC 14893 / NCIMB 12804 / NRRL 8165 / MA-4680).